A 358-amino-acid chain; its full sequence is CCAAT/enhancer-binding protein alpha (358 aa).

Residues 1 to 55 (MESADFYEAEPRPPMSSHLQSPPHAPSSAAFGFPRGAGPAQPPAPPAAPEPLGGI) are disordered. The required to repress E2F1:TFDP1-mediated transcription, to inhibit cell cycle and to induce adipocyte differentiation stretch occupies residues 1–70 (MESADFYEAE…SIDISAYIDP (70 aa)). Residues 29-39 (AAFGFPRGAGP) are compositionally biased toward low complexity. Over residues 40 to 49 (AQPPAPPAAP) the composition is skewed to pro residues. Residues 54-72 (GICEHETSIDISAYIDPAA) are required for interaction with TRIB1. The required to induce adipocyte differentiation stretch occupies residues 128–204 (PPGYGCAAAG…HPPPAHLAAP (77 aa)). Position 161 is an N6-acetyllysine; alternate (Lys161). A Glycyl lysine isopeptide (Lys-Gly) (interchain with G-Cter in SUMO2); alternate cross-link involves residue Lys161. Disordered stretches follow at residues 178 to 201 (LFPY…PAHL) and 217 to 291 (TMHL…RRER). 2 stretches are compositionally biased toward pro residues: residues 181 to 199 (YQPP…PPPA) and 224 to 238 (HPTP…PHPA). A required to functionally cooperate with SREBF1 in promoter activation region spans residues 182-198 (QPPPPPPPSHPHPHPPP). A Phosphoserine modification is found at Ser190. Residues Thr226 and Thr230 each carry the phosphothreonine; by GSK3 modification. Ser234 carries the post-translational modification Phosphoserine; by GSK3. Residues 239 to 259 (PALGAAGLPGPGSALKGLGAA) show a composition bias toward low complexity. The interval 244–358 (AGLPGPGSAL…SLVKAMGNCA (115 aa)) is interaction with FOXO1. A compositionally biased stretch (basic and acidic residues) spans 276–291 (KSVDKNSNEYRVRRER). The bZIP domain occupies 282-345 (SNEYRVRRER…DTLRGIFRQL (64 aa)). Residues 285-300 (YRVRRERNNIAVRKSR) mediate DNA binding. The segment at 286-313 (RVRRERNNIAVRKSRDKAKQRNVETQQK) is basic motif. The tract at residues 317–345 (LTSDNDRLRKRVEQLSRELDTLRGIFRQL) is leucine-zipper.

It belongs to the bZIP family. C/EBP subfamily. Binds DNA as a homodimer and as a heterodimer. Can form stable heterodimers with CEBPB, CEBPD, CEBPE and CEBPG. Interacts with PRDM16. Interacts with UBN1. Interacts with ZNF638; this interaction increases transcriptional activation. Interacts with the complex TFDP2:E2F1; the interaction prevents CEBPA binding to target gene promoters and represses its transcriptional activity. Interacts with RB1. Interacts (when phosphorylated at Ser-190) with CDK2, CDK4, E2F4 and SMARCA2. Interacts with SREBPF1. Interacts with FOXO1 (via the Fork-head domain); the interaction increases when FOXO1 is deacetylated. Interacts with SIX1. Interacts (via recognition sequence) with TRIB1. Interacts (via bZIP domain) with OVOL2 (via zinc-finger domains); the interaction inhibits the transcription factor activity of CEBPA and is required to repress adipogenesis. As to quaternary structure, interacts with TAF1A and UBTF. In terms of assembly, interacts with TAF1A and UBTF. Interacts with NPM1. (Microbial infection) Interacts with HBV protein X. As to quaternary structure, (Microbial infection) Interacts with Epstein-Barr virus lytic switch protein BZLF1; this interaction induces G1 cell cycle arrest. Phosphorylation at Ser-190 is required for interaction with CDK2, CDK4 and SWI/SNF complex leading to cell cycle inhibition. Dephosphorylated at Ser-190 by protein phosphatase 2A (PP2A) through PI3K/AKT signaling pathway regulation. Phosphorylation at Thr-226 and Thr-230 by GSK3 is constitutive in adipose tissue and lung. In liver, both Thr-226 and Thr-230 are phosphorylated only during feeding but not during fasting. Phosphorylation of the GSK3 consensus sites selectively decreases transactivation activity on IRE-controlled promoters. Post-translationally, sumoylated, sumoylation blocks the inhibitory effect on cell proliferation by disrupting the interaction with SMARCA2. In terms of processing, ubiquitinated by COP1 upon interaction with TRIB1.

It is found in the nucleus. The protein localises to the nucleolus. Its function is as follows. Transcription factor that coordinates proliferation arrest and the differentiation of myeloid progenitors, adipocytes, hepatocytes, and cells of the lung and the placenta. Binds directly to the consensus DNA sequence 5'-T[TG]NNGNAA[TG]-3' acting as an activator on distinct target genes. During early embryogenesis, plays essential and redundant functions with CEBPB. Essential for the transition from common myeloid progenitors (CMP) to granulocyte/monocyte progenitors (GMP). Critical for the proper development of the liver and the lung. Necessary for terminal adipocyte differentiation, is required for postnatal maintenance of systemic energy homeostasis and lipid storage. To regulate these different processes at the proper moment and tissue, interplays with other transcription factors and modulators. Down-regulates the expression of genes that maintain cells in an undifferentiated and proliferative state through E2F1 repression, which is critical for its ability to induce adipocyte and granulocyte terminal differentiation. Reciprocally E2F1 blocks adipocyte differentiation by binding to specific promoters and repressing CEBPA binding to its target gene promoters. Proliferation arrest also depends on a functional binding to SWI/SNF complex. In liver, regulates gluconeogenesis and lipogenesis through different mechanisms. To regulate gluconeogenesis, functionally cooperates with FOXO1 binding to IRE-controlled promoters and regulating the expression of target genes such as PCK1 or G6PC1. To modulate lipogenesis, interacts and transcriptionally synergizes with SREBF1 in promoter activation of specific lipogenic target genes such as ACAS2. In adipose tissue, seems to act as FOXO1 coactivator accessing to ADIPOQ promoter through FOXO1 binding sites. In terms of biological role, can act as dominant-negative. Binds DNA and have transctivation activity, even if much less efficiently than isoform 2. Does not inhibit cell proliferation. Directly and specifically enhances ribosomal DNA transcription interacting with RNA polymerase I-specific cofactors and inducing histone acetylation. This chain is CCAAT/enhancer-binding protein alpha, found in Homo sapiens (Human).